We begin with the raw amino-acid sequence, 106 residues long: Small ribosomal subunit protein uS10 (106 aa).

The protein belongs to the universal ribosomal protein uS10 family. In terms of assembly, part of the 30S ribosomal subunit.

In terms of biological role, involved in the binding of tRNA to the ribosomes. The chain is Small ribosomal subunit protein uS10 from Synechococcus sp. (strain RCC307).